Here is a 156-residue protein sequence, read N- to C-terminus: ATP synthase subunit b (156 aa).

The chain crosses the membrane as a helical span at residues 7–27 (LIGQLIAFALFVAFCMKFVWP).

It belongs to the ATPase B chain family. As to quaternary structure, F-type ATPases have 2 components, F(1) - the catalytic core - and F(0) - the membrane proton channel. F(1) has five subunits: alpha(3), beta(3), gamma(1), delta(1), epsilon(1). F(0) has three main subunits: a(1), b(2) and c(10-14). The alpha and beta chains form an alternating ring which encloses part of the gamma chain. F(1) is attached to F(0) by a central stalk formed by the gamma and epsilon chains, while a peripheral stalk is formed by the delta and b chains.

The protein localises to the cell inner membrane. In terms of biological role, f(1)F(0) ATP synthase produces ATP from ADP in the presence of a proton or sodium gradient. F-type ATPases consist of two structural domains, F(1) containing the extramembraneous catalytic core and F(0) containing the membrane proton channel, linked together by a central stalk and a peripheral stalk. During catalysis, ATP synthesis in the catalytic domain of F(1) is coupled via a rotary mechanism of the central stalk subunits to proton translocation. Its function is as follows. Component of the F(0) channel, it forms part of the peripheral stalk, linking F(1) to F(0). The polypeptide is ATP synthase subunit b (Actinobacillus pleuropneumoniae serotype 5b (strain L20)).